We begin with the raw amino-acid sequence, 627 residues long: (-)-alpha-pinene synthase 2, chloroplastic (627 aa).

Residues 1 to 36 (MALVSVAPMASRSCLHKSLSSSAHELKTICRTIPTL) constitute a chloroplast transit peptide. Positions 378, 382, and 530 each coordinate Mg(2+). The short motif at 378–382 (DDMYD) is the DDXXD motif element.

The protein belongs to the terpene synthase family. Tpsd subfamily. Requires Mg(2+) as cofactor. The cofactor is Mn(2+).

It localises to the plastid. It is found in the chloroplast. The catalysed reaction is (2E)-geranyl diphosphate = (1S,5S)-alpha-pinene + diphosphate. It catalyses the reaction (2E)-geranyl diphosphate = (1S,5S)-beta-pinene + diphosphate. It functions in the pathway terpene metabolism; oleoresin biosynthesis. In terms of biological role, involved in defensive oleoresin formation in conifers in response to insect attack or other injury. Involved in monoterpene (C10) olefins biosynthesis. A mixture of alpha- and beta-pinene (35:10) is produced by this enzyme. This Picea sitchensis (Sitka spruce) protein is (-)-alpha-pinene synthase 2, chloroplastic.